The chain runs to 573 residues: MAALAVNKPGAGVDSGRQGSRGTAVVKVLECGVCEDVFSLQGDKVPRLLLCGHTVCHDCLTRLPLHGRAIRCPFDRQVTDLGDSGVWGLKKNFALLELLERLQNGHIGQYGAAEEALGISGESIIRCDEDEAHVASVYCTVCATHLCSECSQVTHSTKTLAKHRRVPLADKPHEKTMCCQHQVHAIEFVCLEEACQTSPLMCCVCKEYGKHQGHKHSVLEPEANQIRASILDMAHCIRTFTEEISDYSRKLVGIVQHIEGGEQIVEDGIGMAHTEHVPGTAENARSCVRAYFSDLHETLCRQEEMALSVVDAHVREKLIWLRQQQEDMTILLSQVSTACLHCKTLQQDDCRVVLAKQEITRLLETLQKQQQQFTEVADHIQLDASIPVTFTKDNRVYHGPKMEIRVVTLGLDGAGKTTILFKLKQDEFMQPIPTIGFNVETVEYKNLKFTIWDVGGKHKLRPLWKHYYLNTQAVVFVVDSSHRDRISEAHSELAKLLTEKELRDALLLIFANKQDVAGALSVEEITELLSLHKLCCGRSWYIQGCDARSGMGLYEGLDWLSRQLVAAGVLDVA.

An RING-type; degenerate zinc finger spans residues Cys31–Arg76. The segment at Glu122–Leu168 adopts a B box-type; degenerate zinc-finger fold. Residues Arg351–Asp378 adopt a coiled-coil conformation. Residues Phe390–Ala573 form an ARF-like region. GTP-binding positions include Leu411–Thr418, Val454–His458, and Lys513–Val516.

The protein in the C-terminal section; belongs to the small GTPase superfamily. Arf family. In terms of assembly, homodimer. Interacts with PSCD1. Interacts with UBE2D2. Interacts with TBK1 (via N-terminal kinase domain) and p62/SQSTM1.

The protein localises to the cytoplasm. The protein resides in the endomembrane system. It is found in the golgi apparatus membrane. Its subcellular location is the lysosome membrane. The enzyme catalyses S-ubiquitinyl-[E2 ubiquitin-conjugating enzyme]-L-cysteine + [acceptor protein]-L-lysine = [E2 ubiquitin-conjugating enzyme]-L-cysteine + N(6)-ubiquitinyl-[acceptor protein]-L-lysine.. It participates in protein modification; protein ubiquitination. Its function is as follows. Acts as an E3 ubiquitin-protein ligase. Plays an essential role in autophagy activation during viral infection. Mechanistically, activates TANK-binding kinase 1/TBK1 by facilitating its dimerization and ability to phosphorylate the selective autophagy receptor SQSTM1. In order to achieve this function, TRIM23 mediates 'Lys-27'-linked auto-ubiquitination of its ADP-ribosylation factor (ARF) domain to induce its GTPase activity and its recruitment to autophagosomes. The chain is E3 ubiquitin-protein ligase TRIM23 (Trim23) from Rattus norvegicus (Rat).